The primary structure comprises 323 residues: 8-oxo-dGDP phosphatase NUDT18 (323 aa).

In terms of domain architecture, Nudix hydrolase spans 37–167 (RLRKNVCYVV…DVLHLVELGA (131 aa)). A Mg(2+)-binding site is contributed by Leu58. Positions 76–97 (GRMEPGETIVEAMQREVKEEAG) match the Nudix box motif.

Belongs to the Nudix hydrolase family. Mn(2+) serves as cofactor. Requires Mg(2+) as cofactor.

The catalysed reaction is 8-oxo-dGDP + H2O = 8-oxo-dGMP + phosphate + H(+). It catalyses the reaction 8-oxo-dADP + H2O = 8-oxo-dAMP + phosphate + H(+). The enzyme catalyses 2-oxo-dADP + H2O = 2-oxo-dAMP + phosphate + H(+). It carries out the reaction 8-oxo-GDP + H2O = 8-oxo-GMP + phosphate + H(+). In terms of biological role, mediates the hydrolysis of oxidized nucleoside diphosphate derivatives. Hydrolyzes 8-oxo-7,8-dihydroguanine (8-oxo-Gua)-containing deoxyribo- and ribonucleoside diphosphates to the monophosphates. Hydrolyzes 8-oxo-dGDP and 8-oxo-GDP with the same efficiencies. Also hydrolyzes 8-OH-dADP and 2-OH-dADP. Exhibited no or minimal hydrolysis activity against 8-oxo-dGTP, 8-oxo-GTP, dGTP, GTP, dGDP and GDP. Probably removes oxidized guanine nucleotides from both the DNA and RNA precursor pools. This Mus musculus (Mouse) protein is 8-oxo-dGDP phosphatase NUDT18.